A 399-amino-acid polypeptide reads, in one-letter code: Stomatin-like protein 1 (399 aa).

A Tyrosine-type lysosomal sorting signal motif is present at residues Gly-6–Leu-10. Ser-28 carries the post-translational modification Phosphoserine. The helical; Signal-anchor for type III membrane protein transmembrane segment at Leu-58–Ala-78 threads the bilayer. The Cytoplasmic segment spans residues Leu-79–Lys-399. An SCP2 domain is found at Lys-288–Lys-399.

It belongs to the band 7/mec-2 family. Interacts with STOM; may redistribute STOM from the plasma membrane to late endosomes. Expressed in dorsal root ganglion neurons.

It is found in the membrane. It localises to the cytoplasmic vesicle. The protein resides in the cell membrane. The protein localises to the late endosome membrane. Its subcellular location is the membrane raft. Its function is as follows. May play a role in cholesterol transfer to late endosomes. May play a role in modulating membrane acid-sensing ion channels. Can specifically inhibit proton-gated current of ASIC1 isoform 1. Can increase inactivation speed of ASIC3. May be involved in regulation of proton sensing in dorsal root ganglions. The protein is Stomatin-like protein 1 (Stoml1) of Mus musculus (Mouse).